The sequence spans 355 residues: Beta-porphyranase C (355 aa).

The N-terminal stretch at 1–18 (MIKTLKRIPLVFLIAIMA) is a signal peptide. C19 carries the N-palmitoyl cysteine lipid modification. The S-diacylglycerol cysteine moiety is linked to residue C19. Positions 22–72 (SGDNGKDKVEEQEQAQEQGEKKGQGEERDKEDGIDGLQPTFLADQDPKPDD) are disordered. A compositionally biased stretch (basic and acidic residues) spans 39-54 (QGEKKGQGEERDKEDG). Residues 71–355 (DDKKWIKVEG…WVRVWQLEDL (285 aa)) enclose the GH16 domain. Substrate contacts are provided by W110, E208, and E213. E208 acts as the Nucleophile in catalysis. E213 (proton donor) is an active-site residue.

Belongs to the glycosyl hydrolase 16 family.

It localises to the cell outer membrane. The enzyme catalyses Hydrolysis of beta-D-galactopyranose-(1-&gt;4)-alpha-L-galactopyranose-6-sulfate linkages in porphyran.. Cleaves the sulfated polysaccharide porphyran at the (1-&gt;4) linkages between beta-D-galactopyranose and alpha-L-galactopyranose-6-sulfate, forming mostly the disaccharide alpha-L-galactopyranose-6-sulfate-(1-&gt;3)-beta-D-galactose. The polypeptide is Beta-porphyranase C (porC) (Zobellia galactanivorans (strain DSM 12802 / CCUG 47099 / CIP 106680 / NCIMB 13871 / Dsij)).